The chain runs to 480 residues: Vacuolar amino acid transporter 2 (480 aa).

Residues 21 to 48 (LTNFPFPGTTDNDSDDGSQGQNSLNIIT) are disordered. Residues 37–46 (GSQGQNSLNI) are compositionally biased toward polar residues. 9 consecutive transmembrane segments (helical) span residues 72–92 (AFMNLANSILGAGIITQPFAI), 95–115 (AGILGGLLSYVALGFIVDWTL), 145–165 (LILFTNGLFAFGGCIGYCIII), 214–234 (LSKASFLAVISMIIIVLTVVI), 263–283 (LSVISFALVCHHNTSFIFFSM), 297–317 (ISIIISVICCALMGYSGFAVF), 338–358 (IARLCFGFNMLTTFPMEIFVL), 394–414 (VFITMGISLTTCNLGALFELI), and 447–467 (FYLCICFGFMIMIISSTQTII).

This sequence belongs to the amino acid/polyamine transporter 2 family.

It localises to the vacuole membrane. Functionally, probable amino acid transporter of unknown specificity. This chain is Vacuolar amino acid transporter 2 (AVT2), found in Saccharomyces cerevisiae (strain ATCC 204508 / S288c) (Baker's yeast).